Consider the following 179-residue polypeptide: UPF0316 protein BH0621 (179 aa).

3 consecutive transmembrane segments (helical) span residues 9–29, 41–61, and 67–87; these read ALTMILIILIINVVYVTLFTV, LAATVSMIEIIVYVLGLSLVL, and IENLIAYAVGYGIGVITGMKV.

Belongs to the UPF0316 family.

It is found in the cell membrane. This chain is UPF0316 protein BH0621, found in Halalkalibacterium halodurans (strain ATCC BAA-125 / DSM 18197 / FERM 7344 / JCM 9153 / C-125) (Bacillus halodurans).